We begin with the raw amino-acid sequence, 237 residues long: Phosphoribosylaminoimidazole-succinocarboxamide synthase (237 aa).

The protein belongs to the SAICAR synthetase family.

The catalysed reaction is 5-amino-1-(5-phospho-D-ribosyl)imidazole-4-carboxylate + L-aspartate + ATP = (2S)-2-[5-amino-1-(5-phospho-beta-D-ribosyl)imidazole-4-carboxamido]succinate + ADP + phosphate + 2 H(+). It functions in the pathway purine metabolism; IMP biosynthesis via de novo pathway; 5-amino-1-(5-phospho-D-ribosyl)imidazole-4-carboxamide from 5-amino-1-(5-phospho-D-ribosyl)imidazole-4-carboxylate: step 1/2. The polypeptide is Phosphoribosylaminoimidazole-succinocarboxamide synthase (Escherichia coli O7:K1 (strain IAI39 / ExPEC)).